Here is a 334-residue protein sequence, read N- to C-terminus: S-adenosylmethionine decarboxylase proenzyme 2 (334 aa).

Phe-7 is a binding site for substrate. Residues Glu-8 and Glu-11 contribute to the active site. Glu-67 contacts substrate. Catalysis depends on Ser-68, which acts as the Schiff-base intermediate with substrate; via pyruvic acid. Pyruvic acid (Ser); by autocatalysis is present on Ser-68. The Proton donor; for catalytic activity role is filled by Cys-82. Substrate is bound at residue Phe-223. Catalysis depends on proton acceptor; for processing activity residues Ser-229 and His-243. Residue Glu-247 coordinates substrate. Phosphoserine is present on Ser-298.

It belongs to the eukaryotic AdoMetDC family. In terms of assembly, heterotetramer of two alpha and two beta chains. The cofactor is pyruvate. Post-translationally, is synthesized initially as an inactive proenzyme. Formation of the active enzyme involves a self-maturation process in which the active site pyruvoyl group is generated from an internal serine residue via an autocatalytic post-translational modification. Two non-identical subunits are generated from the proenzyme in this reaction, and the pyruvate is formed at the N-terminus of the alpha chain, which is derived from the carboxyl end of the proenzyme. The post-translation cleavage follows an unusual pathway, termed non-hydrolytic serinolysis, in which the side chain hydroxyl group of the serine supplies its oxygen atom to form the C-terminus of the beta chain, while the remainder of the serine residue undergoes an oxidative deamination to produce ammonia and the pyruvoyl group blocking the N-terminus of the alpha chain.

It carries out the reaction S-adenosyl-L-methionine + H(+) = S-adenosyl 3-(methylsulfanyl)propylamine + CO2. It functions in the pathway amine and polyamine biosynthesis; S-adenosylmethioninamine biosynthesis; S-adenosylmethioninamine from S-adenosyl-L-methionine: step 1/1. Functionally, essential for biosynthesis of the polyamines spermidine and spermine. Promotes maintenance and self-renewal of embryonic stem cells, by maintaining spermine levels. This Mus spretus (Western Mediterranean mouse) protein is S-adenosylmethionine decarboxylase proenzyme 2 (Amd2).